The sequence spans 857 residues: Autoinducer 2 sensor kinase/phosphatase LuxQ (857 aa).

The next 2 helical transmembrane spans lie at 20 to 40 (IIFL…YYFS) and 283 to 303 (LGLA…RSWI). The Histidine kinase domain maps to 490 to 712 (KMSHEIRTPL…TFYLSIPVEK (223 aa)). At histidine 493 the chain carries Phosphohistidine; by autocatalysis. The region spanning 735-850 (KVLLVEDNHT…ELHDELLHFK (116 aa)) is the Response regulatory domain. Aspartate 784 carries the 4-aspartylphosphate modification.

In terms of assembly, binds the complex formed by the autoinducer and LuxP.

It localises to the cell inner membrane. The catalysed reaction is ATP + protein L-histidine = ADP + protein N-phospho-L-histidine.. At low cell density, in absence of autoinducer has a kinase activity, and autophosphorylates on a histidine residue. The phosphoryl group is then transferred to an aspartate residue in the response regulator domain. The phosphoryl group is transferred to LuxU, and ultimately to LuxO. At high cell density, in the presence of autoinducer, the kinase activity is inactivated, and the response regulator domain has a phosphatase activity. The polypeptide is Autoinducer 2 sensor kinase/phosphatase LuxQ (luxQ) (Vibrio vulnificus (strain YJ016)).